A 405-amino-acid polypeptide reads, in one-letter code: uncharacterized protein (405 aa).

The next 12 membrane-spanning stretches (helical) occupy residues 32-52, 53-73, 84-104, 108-128, 150-170, 171-191, 237-257, 260-280, 291-311, 314-334, 352-372, and 378-398; these read MFVL…VLAG, WLTF…GVLL, IDMI…WLGW, PVVC…IAGI, AVYS…VGWL, GPEA…VCLS, WGAL…VAAG, VVGL…LLAG, IMTA…AEFG, GLTI…VAML, ISIS…GVVI, and AIFV…LSIP.

It belongs to the major facilitator superfamily.

It localises to the cell membrane. This is an uncharacterized protein from Sinorhizobium fredii (strain NBRC 101917 / NGR234).